The primary structure comprises 428 residues: Histidine--tRNA ligase (428 aa).

The protein belongs to the class-II aminoacyl-tRNA synthetase family. As to quaternary structure, homodimer.

The protein resides in the cytoplasm. It catalyses the reaction tRNA(His) + L-histidine + ATP = L-histidyl-tRNA(His) + AMP + diphosphate + H(+). In Mesomycoplasma hyopneumoniae (strain 232) (Mycoplasma hyopneumoniae), this protein is Histidine--tRNA ligase.